A 60-amino-acid polypeptide reads, in one-letter code: Large ribosomal subunit protein uL30 (60 aa).

It belongs to the universal ribosomal protein uL30 family. As to quaternary structure, part of the 50S ribosomal subunit.

This chain is Large ribosomal subunit protein uL30, found in Dehalococcoides mccartyi (strain CBDB1).